Here is a 139-residue protein sequence, read N- to C-terminus: D-ribose pyranase (139 aa).

The active-site Proton donor is the H20. Substrate contacts are provided by residues D28, H106, and 128 to 130; that span reads YAN.

Belongs to the RbsD / FucU family. RbsD subfamily. In terms of assembly, homodecamer.

The protein localises to the cytoplasm. The enzyme catalyses beta-D-ribopyranose = beta-D-ribofuranose. The protein operates within carbohydrate metabolism; D-ribose degradation; D-ribose 5-phosphate from beta-D-ribopyranose: step 1/2. Catalyzes the interconversion of beta-pyran and beta-furan forms of D-ribose. The protein is D-ribose pyranase of Maridesulfovibrio salexigens (strain ATCC 14822 / DSM 2638 / NCIMB 8403 / VKM B-1763) (Desulfovibrio salexigens).